A 369-amino-acid chain; its full sequence is Aminomethyltransferase (369 aa).

It belongs to the GcvT family. The glycine cleavage system is composed of four proteins: P, T, L and H.

The enzyme catalyses N(6)-[(R)-S(8)-aminomethyldihydrolipoyl]-L-lysyl-[protein] + (6S)-5,6,7,8-tetrahydrofolate = N(6)-[(R)-dihydrolipoyl]-L-lysyl-[protein] + (6R)-5,10-methylene-5,6,7,8-tetrahydrofolate + NH4(+). Its function is as follows. The glycine cleavage system catalyzes the degradation of glycine. The chain is Aminomethyltransferase from Xanthomonas campestris pv. campestris (strain 8004).